Here is a 177-residue protein sequence, read N- to C-terminus: GTP-dependent dephospho-CoA kinase (177 aa).

The GTP site is built by D45, V46, V47, D64, and E120.

This sequence belongs to the GTP-dependent DPCK family.

It catalyses the reaction 3'-dephospho-CoA + GTP = GDP + CoA + H(+). Its pathway is cofactor biosynthesis; coenzyme A biosynthesis. Its function is as follows. Catalyzes the GTP-dependent phosphorylation of the 3'-hydroxyl group of dephosphocoenzyme A to form coenzyme A (CoA). The sequence is that of GTP-dependent dephospho-CoA kinase from Halobacterium salinarum (strain ATCC 29341 / DSM 671 / R1).